A 325-amino-acid chain; its full sequence is Elongation factor P--(R)-beta-lysine ligase (325 aa).

Position 76–78 (Ser76–Glu78) interacts with substrate. Residues Arg100 to Glu102 and Asn109 contribute to the ATP site. Tyr118 contacts substrate. ATP is bound at residue Glu244 to Leu245. Glu251 serves as a coordination point for substrate. Gly300 is an ATP binding site.

This sequence belongs to the class-II aminoacyl-tRNA synthetase family. EpmA subfamily. In terms of assembly, homodimer.

It catalyses the reaction D-beta-lysine + L-lysyl-[protein] + ATP = N(6)-((3R)-3,6-diaminohexanoyl)-L-lysyl-[protein] + AMP + diphosphate + H(+). With EpmB is involved in the beta-lysylation step of the post-translational modification of translation elongation factor P (EF-P). Catalyzes the ATP-dependent activation of (R)-beta-lysine produced by EpmB, forming a lysyl-adenylate, from which the beta-lysyl moiety is then transferred to the epsilon-amino group of a conserved specific lysine residue in EF-P. This chain is Elongation factor P--(R)-beta-lysine ligase, found in Edwardsiella ictaluri (strain 93-146).